The sequence spans 452 residues: Serine incorporator 2 (452 aa).

11 consecutive transmembrane segments (helical) span residues 5–25 (LGAC…PCIL), 41–61 (FFTV…SPGV), 96–116 (AVYR…LLMV), 131–151 (GFWF…FYIP), 158–178 (IWFY…LLLL), 205–225 (LFFF…LLFV), 236–256 (GKVF…VAIL), 266–286 (SGLL…WLAL), 319–339 (WDAP…FISL), 387–407 (FFHL…TNWY), and 426–446 (ICAS…PLLL).

Belongs to the TDE1 family.

Its subcellular location is the cell membrane. It catalyses the reaction a 1,2-diacyl-sn-glycero-3-phospho-L-serine(in) = a 1,2-diacyl-sn-glycero-3-phospho-L-serine(out). The enzyme catalyses a 1,2-diacyl-sn-glycero-3-phosphocholine(in) = a 1,2-diacyl-sn-glycero-3-phosphocholine(out). The catalysed reaction is a 1,2-diacyl-sn-glycero-3-phosphoethanolamine(in) = a 1,2-diacyl-sn-glycero-3-phosphoethanolamine(out). In terms of biological role, non-ATP-dependent, non-specific lipid transporter for phosphatidylserine, phosphatidylcholine, and phosphatidylethanolamine. Functions as a scramblase that flips lipids in both directions across the membrane. In contrast to SERINC3 and SERINC5, has no effect on gammaretrovirus particles infectivity. The polypeptide is Serine incorporator 2 (SERINC2) (Bos taurus (Bovine)).